A 26-amino-acid chain; its full sequence is IVGGDECNINEHRFLVALYDPDGFFC.

This sequence belongs to the peptidase S1 family. Snake venom subfamily. In terms of tissue distribution, expressed by the venom gland.

The protein resides in the secreted. Functionally, thrombin-like snake venom serine protease that cleaves alpha-chain of fibrinogen (FGA) releases only fibrinopeptide A. Shows coagulant, esterase and amidase activities. This Lachesis muta rhombeata (Bushmaster) protein is Thrombin-like enzyme LmrSP-3.